We begin with the raw amino-acid sequence, 316 residues long: L-lactate dehydrogenase (316 aa).

Residues Val-15, Asp-37, Lys-42, Tyr-68, and 82 to 83 each bind NAD(+); that span reads GL. Substrate-binding positions include Gln-85, Arg-91, and 123–126; that span reads NPVD. Residues 121–123 and Thr-146 contribute to the NAD(+) site; that span reads ASN. 151–154 contacts substrate; it reads DTSR. Arg-156 and His-171 together coordinate beta-D-fructose 1,6-bisphosphate. His-178 functions as the Proton acceptor in the catalytic mechanism. The residue at position 222 (Tyr-222) is a Phosphotyrosine. A substrate-binding site is contributed by Thr-231.

Belongs to the LDH/MDH superfamily. LDH family. Homotetramer.

The protein localises to the cytoplasm. It catalyses the reaction (S)-lactate + NAD(+) = pyruvate + NADH + H(+). It functions in the pathway fermentation; pyruvate fermentation to lactate; (S)-lactate from pyruvate: step 1/1. Allosterically activated by fructose 1,6-bisphosphate (FBP). In terms of biological role, catalyzes the conversion of lactate to pyruvate. This chain is L-lactate dehydrogenase, found in Borrelia turicatae (strain 91E135).